We begin with the raw amino-acid sequence, 312 residues long: MPFCLTETSLPFGKKYKGKVRDTYDLGDQLILVTTDRQSAFDRCLAAVPYKGQVLNLTSVWWFKNTQSIVPNHLIAVPDPNVAIAKKCKIFPVEFVVRGYISGSTSTSLWTQYQKGVREYCGITFPDGLRKNQKLESPVITPTTKETIHDRPISPHEIVAEGWMTQEDWDETSSYALRLFQHGMEVAQQHGLILVDTKYEFGRDAEGRIVLVDEIHTPDSSRYWLFNGYQERFDAGKEPENIDKEFLRLWFVDHCDPYKDEVLPQAPQELIVTLASRYIQLYEMITGESFVYDSNPGPVNDRILHNIQHWLG.

Belongs to the SAICAR synthetase family.

The catalysed reaction is 5-amino-1-(5-phospho-D-ribosyl)imidazole-4-carboxylate + L-aspartate + ATP = (2S)-2-[5-amino-1-(5-phospho-beta-D-ribosyl)imidazole-4-carboxamido]succinate + ADP + phosphate + 2 H(+). Its pathway is purine metabolism; IMP biosynthesis via de novo pathway; 5-amino-1-(5-phospho-D-ribosyl)imidazole-4-carboxamide from 5-amino-1-(5-phospho-D-ribosyl)imidazole-4-carboxylate: step 1/2. The protein is Phosphoribosylaminoimidazole-succinocarboxamide synthase of Legionella pneumophila (strain Lens).